Here is a 117-residue protein sequence, read N- to C-terminus: Immunoglobulin heavy variable 1-2 (117 aa).

An N-terminal signal peptide occupies residues 1-19; the sequence is MDWTWRILFLVAAATGAHS. Position 20 is a pyrrolidone carboxylic acid (Gln20). The tract at residues 20–44 is framework-1; that stretch reads QVQLVQSGAEVKKPGASVKVSCKAS. The Ig-like domain maps to 20–117; the sequence is QVQLVQSGAE…DDTAVYYCAR (98 aa). Cys41 and Cys115 are disulfide-bonded. The segment at 45-52 is complementarity-determining-1; that stretch reads GYTFTGYY. The framework-2 stretch occupies residues 53–69; it reads MHWVRQAPGQGLEWMGW. The segment at 70–77 is complementarity-determining-2; sequence INPNSGGT. The segment at 78–115 is framework-3; that stretch reads NYAQKFQGWVTMTRDTSISTAYMELSRLRSDDTAVYYC. Residues 116–117 form a complementarity-determining-3 region; sequence AR.

As to quaternary structure, immunoglobulins are composed of two identical heavy chains and two identical light chains; disulfide-linked.

It localises to the secreted. The protein localises to the cell membrane. Functionally, v region of the variable domain of immunoglobulin heavy chains that participates in the antigen recognition. Immunoglobulins, also known as antibodies, are membrane-bound or secreted glycoproteins produced by B lymphocytes. In the recognition phase of humoral immunity, the membrane-bound immunoglobulins serve as receptors which, upon binding of a specific antigen, trigger the clonal expansion and differentiation of B lymphocytes into immunoglobulins-secreting plasma cells. Secreted immunoglobulins mediate the effector phase of humoral immunity, which results in the elimination of bound antigens. The antigen binding site is formed by the variable domain of one heavy chain, together with that of its associated light chain. Thus, each immunoglobulin has two antigen binding sites with remarkable affinity for a particular antigen. The variable domains are assembled by a process called V-(D)-J rearrangement and can then be subjected to somatic hypermutations which, after exposure to antigen and selection, allow affinity maturation for a particular antigen. In Homo sapiens (Human), this protein is Immunoglobulin heavy variable 1-2.